A 1193-amino-acid chain; its full sequence is Probable cation-transporting ATPase 13A4 (1193 aa).

Residues 1 to 32 (MGDHLEKSQHALLNEGDENEMEIFGYRTQGCR) are Cytoplasmic-facing. The stretch at 33–53 (KALCLIGSIFSLGMLPLVFYW) is an intramembrane region. At 54–198 (RPAWRVWANC…DVEITPIWKL (145 aa)) the chain is on the cytoplasmic side. A helical membrane pass occupies residues 199-219 (LIKEVLNPFYIFQLFSVCLWF). The Lumenal segment spans residues 220–224 (SEDYK). Residues 225-245 (EYALAIILMSVISIALTVYDL) form a helical membrane-spanning segment. Residues 246 to 401 (RQQSVKLHHL…NFKLYRDAIR (156 aa)) lie on the Cytoplasmic side of the membrane. The chain crosses the membrane as a helical span at residues 402 to 422 (FLLCLVGTATIGMVYTLCVYV). Residues 423 to 437 (LSGEPPEEVVRKALD) are Lumenal-facing. Residues 438-458 (VITIAVPPALPAALTTGIIYA) form a helical membrane-spanning segment. Residues 459–901 (QRRLKKKGIF…KEGRAALVTS (443 aa)) lie on the Cytoplasmic side of the membrane. Catalysis depends on D487, which acts as the 4-aspartylphosphate intermediate. D849 and D853 together coordinate Mg(2+). A helical membrane pass occupies residues 902 to 922 (FCMFKYMALYSMIQYVGVLLL). Over 923–933 (YWKTNSLSNYQ) the chain is Lumenal. Residues 934 to 954 (FLFQDLAITTLIGVTMNLNGA) form a helical membrane-spanning segment. The Cytoplasmic segment spans residues 955–973 (NPKLVPFRPAGRLISPPLL). Residues 974–994 (LSVVLNILLSLAMHIVGFILV) traverse the membrane as a helical segment. Over 995-1036 (QKQPWYIMDYHSVCPVRNESASALAASPSVPEKTRSNSTFAS) the chain is Lumenal. The chain crosses the membrane as a helical span at residues 1037–1057 (FENTTIWFLGTINCIFVALVF). Residues 1058-1071 (SKGKPFRQPTYTNY) lie on the Cytoplasmic side of the membrane. A helical membrane pass occupies residues 1072–1092 (IFVLVLILQMGVCLFILFADI). At 1093–1105 (PEMHRRLDLLCTP) the chain is on the lumenal side. Residues 1106 to 1126 (VLWRVYILIMISSNFVVSLAV) form a helical membrane-spanning segment. Over 1127–1193 (EKAIIENRAL…PVFESNEEQL (67 aa)) the chain is Cytoplasmic.

Belongs to the cation transport ATPase (P-type) (TC 3.A.3) family. Type V subfamily. In terms of tissue distribution, expressed in brain and stomach.

The protein localises to the early endosome membrane. The protein resides in the late endosome membrane. Its subcellular location is the recycling endosome membrane. The enzyme catalyses ATP + H2O = ADP + phosphate + H(+). The protein is Probable cation-transporting ATPase 13A4 (Atp13a4) of Mus musculus (Mouse).